The primary structure comprises 205 residues: Inosine triphosphate pyrophosphatase (205 aa).

Residue 20–25 (TGNAKK) coordinates ITP. Glu-48 contacts Mg(2+). ITP-binding positions include Lys-60, 76-77 (DT), Lys-93, 152-155 (FGWD), Lys-175, and 180-181 (HR).

Belongs to the HAM1 NTPase family. In terms of assembly, homodimer. It depends on Mg(2+) as a cofactor. Requires Mn(2+) as cofactor.

It is found in the cytoplasm. The catalysed reaction is ITP + H2O = IMP + diphosphate + H(+). It catalyses the reaction dITP + H2O = dIMP + diphosphate + H(+). The enzyme catalyses XTP + H2O = XMP + diphosphate + H(+). Pyrophosphatase that hydrolyzes non-canonical purine nucleotides such as inosine triphosphate (ITP), deoxyinosine triphosphate (dITP) or xanthosine 5'-triphosphate (XTP) to their respective monophosphate derivatives. The enzyme does not distinguish between the deoxy- and ribose forms. Probably excludes non-canonical purines from RNA and DNA precursor pools, thus preventing their incorporation into RNA and DNA and avoiding chromosomal lesions. This Oryza sativa subsp. japonica (Rice) protein is Inosine triphosphate pyrophosphatase.